Here is a 573-residue protein sequence, read N- to C-terminus: Methionine--tRNA ligase (573 aa).

The 'HIGH' region motif lies at 10 to 20; the sequence is PYVNSVPHLGN. Residues Cys-143, Cys-146, Cys-156, and Cys-159 each contribute to the Zn(2+) site. A 'KMSKS' region motif is present at residues 333-337; the sequence is KFSKS. Residue Lys-336 participates in ATP binding.

Belongs to the class-I aminoacyl-tRNA synthetase family. MetG type 1 subfamily. Zn(2+) is required as a cofactor.

Its subcellular location is the cytoplasm. It catalyses the reaction tRNA(Met) + L-methionine + ATP = L-methionyl-tRNA(Met) + AMP + diphosphate. Functionally, is required not only for elongation of protein synthesis but also for the initiation of all mRNA translation through initiator tRNA(fMet) aminoacylation. This chain is Methionine--tRNA ligase, found in Saccharolobus islandicus (strain M.14.25 / Kamchatka #1) (Sulfolobus islandicus).